A 471-amino-acid chain; its full sequence is Putative multidrug resistance protein MdtD (471 aa).

Residues 1 to 11 are Periplasmic-facing; that stretch reads MTDLPDSTRWR. Residues 12-32 form a helical membrane-spanning segment; sequence LWIVAFGFFMQSLDTTIVNTA. Residues 33–48 are Cytoplasmic-facing; sequence LPSMAQSLGESPLHMH. A helical membrane pass occupies residues 49–69; sequence MVIVSYVLTVAVMLPASGWLA. Residues 70-76 are Periplasmic-facing; that stretch reads DKVGVRN. Residues 77-97 traverse the membrane as a helical segment; sequence IFFTAIVLFTLGSLFCALSGT. The Cytoplasmic portion of the chain corresponds to 98-101; the sequence is LNEL. A helical transmembrane segment spans residues 102–124; the sequence is LLARALQGVGGAMMVPVGRLTVM. At 125–137 the chain is on the periplasmic side; that stretch reads KIVPREQYMAAMT. A helical transmembrane segment spans residues 138–158; it reads FVTLPGQVGPLLGPALGGLLV. The Cytoplasmic portion of the chain corresponds to 159 to 164; it reads EYASWH. The helical transmembrane segment at 165–185 threads the bilayer; it reads WIFLINIPVGIIGAIATLMLM. The Periplasmic portion of the chain corresponds to 186-196; the sequence is PNYTMQTRRFD. The chain crosses the membrane as a helical span at residues 197–217; the sequence is LSGFLLLAVGMAVLTLALDGS. The Cytoplasmic segment spans residues 218–224; the sequence is KGTGLSP. A helical transmembrane segment spans residues 225–245; sequence LAIAGLVAVGVVALVLYLLHA. Residues 246 to 262 lie on the Periplasmic side of the membrane; the sequence is QNNNRALFSLKLFRTRT. A helical membrane pass occupies residues 263–283; it reads FSLGLAGSFAGRIGSGMLPFM. The Cytoplasmic portion of the chain corresponds to 284 to 285; sequence TP. The chain crosses the membrane as a helical span at residues 286 to 306; sequence VFLQIGLGFSPFHAGLMMIPM. Residues 307–341 lie on the Periplasmic side of the membrane; that stretch reads VLGSMGMKRIVVQVVNRFGYRRVLVATTLGLSLVT. A helical transmembrane segment spans residues 342–362; that stretch reads LLFMTTALLGWYYVLPFVLFL. Residues 363 to 395 lie on the Cytoplasmic side of the membrane; that stretch reads QGMVNSTRFSSMNTLTLKDLPDNLASSGNSLLS. Residues 396 to 416 form a helical membrane-spanning segment; sequence MIMQLSMSIGVTIAGLLLGLF. The Periplasmic segment spans residues 417–430; sequence GSQHVSVDSGTTQT. The chain crosses the membrane as a helical span at residues 431 to 451; sequence VFMYTWLSMASIIALPAFIFA. Residues 452 to 471 lie on the Cytoplasmic side of the membrane; that stretch reads RVPNDTHQNVAISRRKRSAQ.

Belongs to the major facilitator superfamily. TCR/Tet family.

Its subcellular location is the cell inner membrane. This chain is Putative multidrug resistance protein MdtD, found in Escherichia coli O6:K15:H31 (strain 536 / UPEC).